Here is a 277-residue protein sequence, read N- to C-terminus: Large ribosomal subunit protein uL2 (277 aa).

Disordered stretches follow at residues 37–60 (KNST…GHKH) and 223–265 (VVMN…KRTD). Polar residues predominate over residues 39–49 (STAGRNNNGHI). Residues 50–60 (TTRHKGGGHKH) show a composition bias toward basic residues. Positions 229-244 (DHPHGGGEGRTGEARE) are enriched in basic and acidic residues.

Belongs to the universal ribosomal protein uL2 family. As to quaternary structure, part of the 50S ribosomal subunit. Forms a bridge to the 30S subunit in the 70S ribosome.

Its function is as follows. One of the primary rRNA binding proteins. Required for association of the 30S and 50S subunits to form the 70S ribosome, for tRNA binding and peptide bond formation. It has been suggested to have peptidyltransferase activity; this is somewhat controversial. Makes several contacts with the 16S rRNA in the 70S ribosome. The sequence is that of Large ribosomal subunit protein uL2 from Neisseria meningitidis serogroup A / serotype 4A (strain DSM 15465 / Z2491).